A 181-amino-acid polypeptide reads, in one-letter code: ADP-ribosylation factor 3 (181 aa).

A lipid anchor (N-myristoyl glycine) is attached at G2. Residues 24–31 (GLDAAGKT), 67–71 (DVGGQ), and 126–129 (NKQD) each bind GTP.

It belongs to the small GTPase superfamily. Arf family. In terms of assembly, interacts with PRKCABP. Interacts with PI4KB and NCS1/FREQ at the Golgi complex.

Its subcellular location is the golgi apparatus. The protein resides in the cytoplasm. It localises to the perinuclear region. GTP-binding protein that functions as an allosteric activator of the cholera toxin catalytic subunit, an ADP-ribosyltransferase. Involved in protein trafficking; may modulate vesicle budding and uncoating within the Golgi apparatus. This Bos taurus (Bovine) protein is ADP-ribosylation factor 3 (ARF3).